A 283-amino-acid polypeptide reads, in one-letter code: Elongation factor Ts (283 aa).

The involved in Mg(2+) ion dislocation from EF-Tu stretch occupies residues 80–83; that stretch reads TDFV.

This sequence belongs to the EF-Ts family.

It localises to the cytoplasm. Functionally, associates with the EF-Tu.GDP complex and induces the exchange of GDP to GTP. It remains bound to the aminoacyl-tRNA.EF-Tu.GTP complex up to the GTP hydrolysis stage on the ribosome. This Salmonella gallinarum (strain 287/91 / NCTC 13346) protein is Elongation factor Ts.